Consider the following 452-residue polypeptide: Gastrin/cholecystokinin type B receptor (452 aa).

Residues 1–55 are Extracellular-facing; it reads MELVKLNRSVQGSGPVASLCRPGGPLLNNSGTGNLSCEPPRIRGAGTRELELAIR. Asparagine 7, asparagine 28, and asparagine 34 each carry an N-linked (GlcNAc...) asparagine glycan. A helical transmembrane segment spans residues 56-77; that stretch reads VTLYAVIFLMSVGGNILIIVVL. Residues 78 to 85 are Cytoplasmic-facing; that stretch reads GLSRRLRT. Residues 86 to 107 form a helical membrane-spanning segment; it reads VTNAFLLSLAVSDLLLAVACMP. Residues 108 to 129 are Extracellular-facing; that stretch reads FTLLPNLMGTFIFGTVICKAVS. A disulfide bridge connects residues cysteine 125 and cysteine 203. The helical transmembrane segment at 130–148 threads the bilayer; sequence YLMGVSVSVSTLSLVAIAL. The Cytoplasmic portion of the chain corresponds to 149–168; the sequence is ERYSAICRPLQARVWQTRSH. The helical transmembrane segment at 169-187 threads the bilayer; sequence AARVILATWLLSGLLMVPY. Residues 188–217 are Extracellular-facing; that stretch reads PVYTAVQPVGPRVLQCVHRWPSARVRQTWS. The chain crosses the membrane as a helical span at residues 218–240; the sequence is VLLLLLLFFVPGVVMAVAYGLIS. The Cytoplasmic segment spans residues 241–338; that stretch reads RELYLGLRFD…KLLAKKRVVR (98 aa). A disordered region spans residues 255–285; it reads SESQSRVRGQGGLPGGAAPGPVHQNGRCRPE. A compositionally biased stretch (gly residues) spans 263-272; it reads GQGGLPGGAA. Residues 339–360 traverse the membrane as a helical segment; sequence MLLVIVVLFFMCWLPVYSANTW. Topologically, residues 361–378 are extracellular; the sequence is RAFDGPGAHRALSGAPIS. A helical transmembrane segment spans residues 379–399; that stretch reads FIHLLSYASACVNPLVYCFMH. Residues 400–452 lie on the Cytoplasmic side of the membrane; that stretch reads RRFRQACLDTCARCCPRPPRARPRPLPDEDPPTPSIASLSRLSYTTISTLGPG. Residue cysteine 413 is the site of S-palmitoyl cysteine attachment.

Belongs to the G-protein coupled receptor 1 family.

The protein resides in the cell membrane. In terms of biological role, receptor for gastrin and cholecystokinin. The CCK-B receptors occur throughout the central nervous system where they modulate anxiety, analgesia, arousal, and neuroleptic activity. This receptor mediates its action by association with G proteins that activate a phosphatidylinositol-calcium second messenger system. The sequence is that of Gastrin/cholecystokinin type B receptor (CCKBR) from Oryctolagus cuniculus (Rabbit).